Reading from the N-terminus, the 185-residue chain is Large ribosomal subunit protein uL16m (185 aa).

This sequence belongs to the universal ribosomal protein uL16 family.

The protein localises to the mitochondrion. This chain is Large ribosomal subunit protein uL16m (RPL16), found in Oryza sativa subsp. japonica (Rice).